A 275-amino-acid chain; its full sequence is Diaminopimelate epimerase (275 aa).

The substrate site is built by asparagine 12, glutamine 45, and asparagine 65. The Proton donor role is filled by cysteine 74. Substrate contacts are provided by residues 75 to 76 (GN), asparagine 158, asparagine 191, and 209 to 210 (ER). Cysteine 218 functions as the Proton acceptor in the catalytic mechanism. 219 to 220 (GT) serves as a coordination point for substrate.

Belongs to the diaminopimelate epimerase family. Homodimer.

It is found in the cytoplasm. It carries out the reaction (2S,6S)-2,6-diaminopimelate = meso-2,6-diaminopimelate. It functions in the pathway amino-acid biosynthesis; L-lysine biosynthesis via DAP pathway; DL-2,6-diaminopimelate from LL-2,6-diaminopimelate: step 1/1. In terms of biological role, catalyzes the stereoinversion of LL-2,6-diaminopimelate (L,L-DAP) to meso-diaminopimelate (meso-DAP), a precursor of L-lysine and an essential component of the bacterial peptidoglycan. The sequence is that of Diaminopimelate epimerase from Shewanella baltica (strain OS223).